The primary structure comprises 195 residues: Imidazoleglycerol-phosphate dehydratase (195 aa).

It belongs to the imidazoleglycerol-phosphate dehydratase family.

It localises to the cytoplasm. It carries out the reaction D-erythro-1-(imidazol-4-yl)glycerol 3-phosphate = 3-(imidazol-4-yl)-2-oxopropyl phosphate + H2O. The protein operates within amino-acid biosynthesis; L-histidine biosynthesis; L-histidine from 5-phospho-alpha-D-ribose 1-diphosphate: step 6/9. The sequence is that of Imidazoleglycerol-phosphate dehydratase from Aminomonas aminovorus.